The chain runs to 268 residues: uncharacterized protein (268 aa).

Residues 150–172 form a helical membrane-spanning segment; sequence LYSIADFLAYTFTYFYLATVGLA.

The protein resides in the host membrane. This is an uncharacterized protein from Sulfolobus islandicus rod-shaped virus 1 (SIRV-1).